We begin with the raw amino-acid sequence, 481 residues long: MSVVVGDRSESTLMRSDYKAPPSQAIPKARLQVWFFRVCSCILVWTCLIQLFWHSQIFTGLTNHISRFSLPVQSVPLPPPLPPRNYTSNGILLVSCNGGLNQMRAAICDMVTVARLLNLTLVVPELDKKSFWADTSDFEDIFDIKHFIDSLRDEVRIIRRLPKRYSKKYGFKLFEMPPVSWSNDKYYLQQVLPRFSKRKVIHFVRSDTRLANNGLSLDLQRLRCRVNFQGLRFTPRIEALGSKLVRILQQRGSFVALHLRYEMDMLAFSGCTHGCTDEEAEELKKMRYAYPWWREKEIVSEERRVQGLCPLTPEEAVLVLKALGFQKDTQIYIAAGEIFGGAKRLALLKESFPRIVKKEMLLDPTELQQFQNHSSQMAALDFIVSVASNTFIPTYYGNMAKVVEGHRRYLGFKKTILLDRKRLVELLDLHNNKTLSWDQFAVAVKDAHQGRRMGEPTHRKVISVRPKEEDYFYANPQECIS.

Residues V33–S55 form a helical; Signal-anchor for type II membrane protein membrane-spanning segment. Residues N85 and N118 are each glycosylated (N-linked (GlcNAc...) asparagine). Position 258–260 (H258–R260) interacts with substrate. N372 and N432 each carry an N-linked (GlcNAc...) asparagine glycan.

This sequence belongs to the glycosyltransferase GT106 family.

It localises to the golgi apparatus membrane. It carries out the reaction alpha-D-galacturonosyl-[(1-&gt;2)-alpha-L-rhamnosyl-(1-&gt;4)-alpha-D-galacturonosyl](n) + UDP-beta-L-rhamnose = [(1-&gt;2)-alpha-L-rhamnosyl-(1-&gt;4)-alpha-D-galacturonosyl](n+1) + UDP + H(+). The protein operates within glycan metabolism; pectin biosynthesis. Its function is as follows. Glycosyltransferase involved in the formation of rhamnogalacturonan I (RG-I) oligosaccharides in the seed coat mucilage, which is a specialized cell wall with abundant RG-I. Transfers the rhamnose residue from UDP-beta-L-rhamnose to RG-I oligosaccharides. This Arabidopsis thaliana (Mouse-ear cress) protein is Rhamnogalacturonan I rhamnosyltransferase 4.